The sequence spans 242 residues: MLIDWILKNIMDMDQEDQSGKTQWTKYYLTVYFSGLFNFLMILILSVLFGTLSETFIVYVVLIFLRPVAGGWHAKTKWLCRLESIVIYVAIPFVLKNSSVSLPFIYKILLICLLVVLFYWYAPQGTAIEPVQPSDLNVLKKQSLIRVCLLILCSLFVKEKIASVILYGLVIQGLMILPVTKNLIEGSVFMKFGKKIIKNVIEKRVAKVSDGVGTKPRLNQNSPNIFGQWMGQTEKPKKNIEK.

Transmembrane regions (helical) follow at residues 29-49 (LTVY…SVLF), 52-72 (LSET…AGGW), 78-95 (WLCR…PFVL), 100-120 (VSLP…LFYW), and 160-180 (KIAS…LPVT).

The protein belongs to the AgrB family.

The protein resides in the cell membrane. Functionally, may be involved in the proteolytic processing of a quorum sensing system signal molecule precursor required for the regulation of the virulence genes for gelatinase (gelE) and a serine protease (sprE). In Enterococcus faecalis (strain ATCC 47077 / OG1RF), this protein is Protein FsrB (fsrB).